The following is a 700-amino-acid chain: Glycine--tRNA ligase beta subunit (700 aa).

Belongs to the class-II aminoacyl-tRNA synthetase family. In terms of assembly, tetramer of two alpha and two beta subunits.

The protein resides in the cytoplasm. The catalysed reaction is tRNA(Gly) + glycine + ATP = glycyl-tRNA(Gly) + AMP + diphosphate. This is Glycine--tRNA ligase beta subunit from Janthinobacterium sp. (strain Marseille) (Minibacterium massiliensis).